Reading from the N-terminus, the 147-residue chain is Myoglobin (147 aa).

The 140-residue stretch at Ala-2–Lys-141 folds into the Globin domain. His-60 serves as a coordination point for nitrite. Residue His-60 coordinates O2. His-89 lines the heme b pocket.

The protein belongs to the globin family. Monomeric.

The protein resides in the cytoplasm. It is found in the sarcoplasm. It catalyses the reaction Fe(III)-heme b-[protein] + nitric oxide + H2O = Fe(II)-heme b-[protein] + nitrite + 2 H(+). The enzyme catalyses H2O2 + AH2 = A + 2 H2O. Its function is as follows. Monomeric heme protein which primary function is to store oxygen and facilitate its diffusion within muscle tissues. Reversibly binds oxygen through a pentacoordinated heme iron and enables its timely and efficient release as needed during periods of heightened demand. Depending on the oxidative conditions of tissues and cells, and in addition to its ability to bind oxygen, it also has a nitrite reductase activity whereby it regulates the production of bioactive nitric oxide. Under stress conditions, like hypoxia and anoxia, it also protects cells against reactive oxygen species thanks to its pseudoperoxidase activity. This Scomber japonicus (Chub mackerel) protein is Myoglobin (mb).